The chain runs to 348 residues: MERPEAGGINSNECENVSRKKKMSEEFEANTMDSLVDMPFATVDIQDDCGITDEPQINLKRSQENEWVKSDQVKKRKKKRKDYQPNYFLSIPITNKEIIKGIKILQNAIIQQDERLAKAMVSDGSFHITLLVMQLLNEDEVNIGIDALLELKPFIEELLQGKHLTLPFQGIGTFGNQVGFVKLAEGDHVNSLLEIAETANRTFQEKGILVGESRSFKPHLTFMKLSKSPWLRKNGVKKIDPDLYEKFISHRFGEEILYRIDLCSMLKKKQSNGYYHCESSIVIGEKNGGEPDDAELVRLSKRLVENAVLKAVQQYLEETQNKNKPGEGSSVKTEAADQNGNDNENNRK.

The segment at 1–25 is disordered; that stretch reads MERPEAGGINSNECENVSRKKKMSE. AMP-binding positions include Thr-129 and 219–221; that span reads HLT. Residues Thr-129 and 219 to 221 contribute to the CMP site; that span reads HLT. The interval 294-348 is PKA-RII-alpha subunit binding domain; the sequence is AELVRLSKRLVENAVLKAVQQYLEETQNKNKPGEGSSVKTEAADQNGNDNENNRK. Positions 295–319 are RI-alpha-binding; it reads ELVRLSKRLVENAVLKAVQQYLEET. Residues 296–309 are RII-binding; the sequence is LVRLSKRLVENAVL. The interval 316–348 is disordered; that stretch reads LEETQNKNKPGEGSSVKTEAADQNGNDNENNRK. Over residues 330–348 the composition is skewed to polar residues; sequence SVKTEAADQNGNDNENNRK.

As to quaternary structure, binds cAMP-dependent protein kinase (PKA). Interacts with PRKCA; only the cytoplasmic form is capable of interacting with PRKCA. Expressed in brain, heart, lung, pancreas and placenta.

It is found in the nucleus. It localises to the cytoplasm. Functionally, probably targets cAMP-dependent protein kinase (PKA) to the cellular membrane or cytoskeletal structures. The membrane-associated form reduces epithelial sodium channel (ENaC) activity, whereas the free cytoplasmic form may negatively regulate ENaC channel feedback inhibition by intracellular sodium. The sequence is that of A-kinase anchor protein 7 isoform gamma (AKAP7) from Homo sapiens (Human).